Reading from the N-terminus, the 396-residue chain is Purine ribonucleoside efflux pump NepI (396 aa).

Residues methionine 1–alanine 21 lie on the Cytoplasmic side of the membrane. A helical membrane pass occupies residues valine 22–leucine 42. Topologically, residues leucine 43 to glutamate 54 are periplasmic. The chain crosses the membrane as a helical span at residues glycine 55–isoleucine 75. Residues threonine 76–arginine 85 are Cytoplasmic-facing. The chain crosses the membrane as a helical span at residues tyrosine 86–asparagine 106. Position 107 (serine 107) is a topological domain, periplasmic. The helical transmembrane segment at phenylalanine 108–methionine 128 threads the bilayer. The Cytoplasmic segment spans residues serine 129–serine 147. Residues valine 148–glycine 168 traverse the membrane as a helical segment. At glutamate 169–asparagine 175 the chain is on the periplasmic side. The chain crosses the membrane as a helical span at residues valine 176–proline 196. Residues serine 197–arginine 215 are Cytoplasmic-facing. Residues proline 216–phenylalanine 236 traverse the membrane as a helical segment. Over threonine 237 to threonine 255 the chain is Periplasmic. Residues leucine 256 to leucine 276 traverse the membrane as a helical segment. Over lysine 277–lysine 281 the chain is Cytoplasmic. A helical transmembrane segment spans residues leucine 282–glycine 302. The Periplasmic portion of the chain corresponds to serine 303 to lysine 305. A helical transmembrane segment spans residues isoleucine 306–tryptophan 326. At serine 327–serine 343 the chain is on the cytoplasmic side. The chain crosses the membrane as a helical span at residues isoleucine 344–leucine 364. Residues aspartate 365–asparagine 366 are Periplasmic-facing. The chain crosses the membrane as a helical span at residues isoleucine 367–valine 387. The Cytoplasmic segment spans residues threonine 388–serine 396.

It belongs to the major facilitator superfamily. DHA1 family. NepI (TC 2.A.1.2.26) subfamily.

Its subcellular location is the cell inner membrane. It carries out the reaction inosine(in) + H(+)(out) = inosine(out) + H(+)(in). It catalyses the reaction guanosine(in) + H(+)(out) = guanosine(out) + H(+)(in). Its function is as follows. Involved in the efflux of purine ribonucleosides, such as inosine and guanosine. The chain is Purine ribonucleoside efflux pump NepI from Shigella flexneri.